The primary structure comprises 204 residues: V-set and transmembrane domain-containing protein 2-like protein (204 aa).

A signal peptide spans methionine 1 to alanine 24. An Ig-like domain is found at alanine 41 to lysine 158. A disulfide bridge connects residues cysteine 62 and cysteine 142. A disordered region spans residues asparagine 168–leucine 204. A compositionally biased stretch (pro residues) spans glutamate 175 to lysine 187. Over residues proline 188–aspartate 198 the composition is skewed to basic and acidic residues.

This chain is V-set and transmembrane domain-containing protein 2-like protein (VSTM2L), found in Homo sapiens (Human).